The following is an 85-amino-acid chain: U4-theraphotoxin-Hhn1p (85 aa).

Positions 1–22 (MKMTLIAIPTCAAVLVLHTTAA) are cleaved as a signal peptide. The propeptide occupies 23–48 (EELEAESQLMEVGMPDTELEAVDGER). Disulfide bonds link Cys52–Cys66, Cys56–Cys77, and Cys71–Cys82.

The protein belongs to the neurotoxin 12 (Hwtx-2) family. 02 (Hwtx-2) subfamily. Expressed by the venom gland.

The protein resides in the secreted. Postsynaptic neurotoxin. In Cyriopagopus hainanus (Chinese bird spider), this protein is U4-theraphotoxin-Hhn1p.